A 238-amino-acid chain; its full sequence is Ubiquinone/menaquinone biosynthesis C-methyltransferase UbiE (238 aa).

The S-adenosyl-L-methionine site is built by Thr62 and Asp82.

The protein belongs to the class I-like SAM-binding methyltransferase superfamily. MenG/UbiE family.

It carries out the reaction a 2-demethylmenaquinol + S-adenosyl-L-methionine = a menaquinol + S-adenosyl-L-homocysteine + H(+). The catalysed reaction is a 2-methoxy-6-(all-trans-polyprenyl)benzene-1,4-diol + S-adenosyl-L-methionine = a 5-methoxy-2-methyl-3-(all-trans-polyprenyl)benzene-1,4-diol + S-adenosyl-L-homocysteine + H(+). Its pathway is quinol/quinone metabolism; menaquinone biosynthesis; menaquinol from 1,4-dihydroxy-2-naphthoate: step 2/2. It participates in cofactor biosynthesis; ubiquinone biosynthesis. In terms of biological role, methyltransferase required for the conversion of demethylmenaquinol (DMKH2) to menaquinol (MKH2) and the conversion of 2-polyprenyl-6-methoxy-1,4-benzoquinol (DDMQH2) to 2-polyprenyl-3-methyl-6-methoxy-1,4-benzoquinol (DMQH2). In Wolbachia pipientis wMel, this protein is Ubiquinone/menaquinone biosynthesis C-methyltransferase UbiE.